The following is a 315-amino-acid chain: Putative serine/threonine-protein phosphatase PP2A-4 catalytic subunit (315 aa).

Mn(2+)-binding residues include Asp-63, His-65, Asp-91, and Asn-123. His-124 functions as the Proton donor in the catalytic mechanism. The Mn(2+) site is built by His-173 and His-247.

It belongs to the PPP phosphatase family. PP-2A subfamily. Requires Mn(2+) as cofactor.

The protein localises to the cytoplasm. It catalyses the reaction O-phospho-L-seryl-[protein] + H2O = L-seryl-[protein] + phosphate. The catalysed reaction is O-phospho-L-threonyl-[protein] + H2O = L-threonyl-[protein] + phosphate. The sequence is that of Putative serine/threonine-protein phosphatase PP2A-4 catalytic subunit (PP2A4) from Oryza sativa subsp. indica (Rice).